Consider the following 315-residue polypeptide: Rhomboid-related protein 4 (315 aa).

Residues 1-21 (MQRRTRGINTGLLLLLSQVFQ) are Cytoplasmic-facing. The chain crosses the membrane as a helical span at residues 22–42 (IGINNIPPVTLATLAVNVWFF). The Lumenal segment spans residues 43-103 (LNPWKPLYHS…KLERRLGSRW (61 aa)). Residues 104–124 (FAYVIATFSLLTGVVYLLLQF) form a helical membrane-spanning segment. The Cytoplasmic portion of the chain corresponds to 125–137 (TVAELLNQPDFKR). Residues 138–154 (NCAVGFSGVLFALKVLS) form a helical membrane-spanning segment. The Nucleophile role is filled by Ser144. Residues 155–180 (NHYCPGGFVNILGFPVPNRFACWAEL) lie on the Lumenal side of the membrane. Residues 181 to 201 (VAIHFCTPGTSFAGHLAGILV) traverse the membrane as a helical segment. Residue His195 is part of the active site. Topologically, residues 202–315 (GLMYTQGPLK…RQRLHRFDGQ (114 aa)) are cytoplasmic. Positions 269-284 (SEEEQLERALRASIWD) are ubiquitin-binding domain (UBD). Residues 301 to 315 (PEEMRRQRLHRFDGQ) are VCP/p97-interacting motif (VIM).

The protein belongs to the peptidase S54 family. As to quaternary structure, interacts with BIK and STEAP3. Interacts (via C-terminal domain) with VCP/P97. Interacts with ubiquitin and ubiquitinated proteins. Expressed in testis (at protein level). Expressed in intestine, lung, brain, kidney, epididymis, stomach, muscle, spleen, liver, heart and testis.

It is found in the endoplasmic reticulum membrane. The protein localises to the mitochondrion membrane. It catalyses the reaction Cleaves type-1 transmembrane domains using a catalytic dyad composed of serine and histidine that are contributed by different transmembrane domains.. Inhibited by aprotinin. In terms of biological role, intramembrane-cleaving serine protease that cleaves single transmembrane or multi-pass membrane proteins in the hydrophobic plane of the membrane, luminal loops and juxtamembrane regions. Involved in regulated intramembrane proteolysis and the subsequent release of functional polypeptides from their membrane anchors. Functional component of endoplasmic reticulum-associated degradation (ERAD) for misfolded membrane proteins. Required for the degradation process of some specific misfolded endoplasmic reticulum (ER) luminal proteins. Participates in the transfer of misfolded proteins from the ER to the cytosol, where they are destroyed by the proteasome in a ubiquitin-dependent manner. Functions in BIK, MPZ, PKD1, PTCRA, RHO, STEAP3 and TRAC processing. Involved in the regulation of exosomal secretion; inhibits the TSAP6-mediated secretion pathway. Involved in the regulation of apoptosis; modulates BIK-mediated apoptotic activity. Also plays a role in the regulation of spermatogenesis; inhibits apoptotic activity in spermatogonia. This Mus musculus (Mouse) protein is Rhomboid-related protein 4 (Rhbdd1).